The primary structure comprises 411 residues: Serine hydroxymethyltransferase (411 aa).

(6S)-5,6,7,8-tetrahydrofolate contacts are provided by residues Leu-113 and 117 to 119; that span reads GHL. The residue at position 222 (Lys-222) is an N6-(pyridoxal phosphate)lysine. Residues Glu-238 and 346–348 contribute to the (6S)-5,6,7,8-tetrahydrofolate site; that span reads SPF.

It belongs to the SHMT family. Homodimer. Pyridoxal 5'-phosphate serves as cofactor.

It is found in the cytoplasm. It carries out the reaction (6R)-5,10-methylene-5,6,7,8-tetrahydrofolate + glycine + H2O = (6S)-5,6,7,8-tetrahydrofolate + L-serine. It participates in one-carbon metabolism; tetrahydrofolate interconversion. It functions in the pathway amino-acid biosynthesis; glycine biosynthesis; glycine from L-serine: step 1/1. In terms of biological role, catalyzes the reversible interconversion of serine and glycine with tetrahydrofolate (THF) serving as the one-carbon carrier. This reaction serves as the major source of one-carbon groups required for the biosynthesis of purines, thymidylate, methionine, and other important biomolecules. Also exhibits THF-independent aldolase activity toward beta-hydroxyamino acids, producing glycine and aldehydes, via a retro-aldol mechanism. The chain is Serine hydroxymethyltransferase from Prochlorococcus marinus (strain NATL1A).